The chain runs to 172 residues: Large ribosomal subunit protein uL10 (172 aa).

This sequence belongs to the universal ribosomal protein uL10 family. Part of the ribosomal stalk of the 50S ribosomal subunit. The N-terminus interacts with L11 and the large rRNA to form the base of the stalk. The C-terminus forms an elongated spine to which L12 dimers bind in a sequential fashion forming a multimeric L10(L12)X complex.

Forms part of the ribosomal stalk, playing a central role in the interaction of the ribosome with GTP-bound translation factors. The protein is Large ribosomal subunit protein uL10 of Bartonella henselae (strain ATCC 49882 / DSM 28221 / CCUG 30454 / Houston 1) (Rochalimaea henselae).